The following is a 2464-amino-acid chain: Highly reducing polyketide synthase xilA (2464 aa).

Positions 9–437 constitute a Ketosynthase family 3 (KS3) domain; it reads HDPIALVGIG…GTNGHCIIDH (429 aa). Active-site for beta-ketoacyl synthase activity residues include cysteine 182, histidine 318, and histidine 360. The segment covering 461-487 has biased composition (low complexity); that stretch reads QNGINGTNGTNGTNGTNGTNGTNGTNG. Positions 461–495 are disordered; sequence QNGINGTNGTNGTNGTNGTNGTNGTNGHHNPKTEA. Residues 589-911 enclose the Malonyl-CoA:ACP transacylase (MAT) domain; the sequence is FIFTGQGAQW…LKRNEDAQRL (323 aa). Positions 983–1121 are N-terminal hotdog fold; that stretch reads HDLLGSKVPG…GQIKIEVSTF (139 aa). One can recognise a PKS/mFAS DH domain in the interval 983-1286; it reads HDLLGSKVPG…FTSLNNEQES (304 aa). Histidine 1015 serves as the catalytic Proton acceptor; for dehydratase activity. The C-terminal hotdog fold stretch occupies residues 1133–1286; that stretch reads GRLVDAQTWY…FTSLNNEQES (154 aa). The active-site Proton donor; for dehydratase activity is aspartate 1199. Residues 1282-1490 are methyltransferase (CMeT) domain; sequence NEQESTSTGD…TEPAHHSTIT (209 aa). Residues 1716–2028 enclose the Enoyl reductase (ER) domain; that stretch reads GILTSLYFKP…KGTHIGKMVI (313 aa). In terms of domain architecture, Ketoreductase (KR) spans 2052-2231; sequence ANYILVGGMS…ATTVSLGFIN (180 aa). The region spanning 2383–2461 is the Carrier domain; it reads ETVTFVTDAI…SIAQVIVEEA (79 aa). Residue serine 2420 is modified to O-(pantetheine 4'-phosphoryl)serine.

Pantetheine 4'-phosphate serves as cofactor.

The protein operates within secondary metabolite biosynthesis. Its function is as follows. Highly reducing polyketide synthase; part of the gene cluster that mediates the biosynthesis of the 6-methyl-2-pyrone derivative xylariolide D. XilA produces the 5-alkyl-6-methyl-2-pyrone backbone called prexylariolide D via sequential condensations of 4 malonyl-CoA units with one acetyl-CoA starter unit. During the biosynthesis, the linear polyketide chain is branched by the addition of an acetyl unit as the origin of the methyl group at the 2-pyrone ring. Prexylariolide D is then hydroxylated at the side chain by xilC to form the final product, xylariolide D. The chain is Highly reducing polyketide synthase xilA from Penicillium rubens (strain ATCC 28089 / DSM 1075 / NRRL 1951 / Wisconsin 54-1255) (Penicillium chrysogenum).